Reading from the N-terminus, the 195-residue chain is MASMAFTLVGAFKGMSLSSPCHSSSSASFLRADRVSLSVGGGVGMGVPMTMPVRRLTIQMAHKKGAGSTKNGRDSPGQRLGVKIYGDQVAKPGAIIIRQRGTRVYPGNNVGMGKDHTLFSLIDGLVKFEKYGPDKKKVSVYPYEKQPENPNSYRARKREYFRMQRERKKARAEGIVEVQLVLAAADESPEVNADC.

The N-terminal 60 residues, 1 to 60 (MASMAFTLVGAFKGMSLSSPCHSSSSASFLRADRVSLSVGGGVGMGVPMTMPVRRLTIQM), are a transit peptide targeting the chloroplast.

It belongs to the bacterial ribosomal protein bL27 family. As to quaternary structure, part of the 50S ribosomal subunit.

It localises to the plastid. The protein localises to the chloroplast. In Oryza sativa subsp. japonica (Rice), this protein is Large ribosomal subunit protein bL27c (RPL27).